We begin with the raw amino-acid sequence, 72 residues long: Translation initiation factor IF-1 (72 aa).

The 72-residue stretch at 1–72 folds into the S1-like domain; that stretch reads MSKDDSIEFE…TKGRITYRMK (72 aa).

The protein belongs to the IF-1 family. Component of the 30S ribosomal translation pre-initiation complex which assembles on the 30S ribosome in the order IF-2 and IF-3, IF-1 and N-formylmethionyl-tRNA(fMet); mRNA recruitment can occur at any time during PIC assembly.

The protein localises to the cytoplasm. One of the essential components for the initiation of protein synthesis. Stabilizes the binding of IF-2 and IF-3 on the 30S subunit to which N-formylmethionyl-tRNA(fMet) subsequently binds. Helps modulate mRNA selection, yielding the 30S pre-initiation complex (PIC). Upon addition of the 50S ribosomal subunit IF-1, IF-2 and IF-3 are released leaving the mature 70S translation initiation complex. This is Translation initiation factor IF-1 from Xanthomonas campestris pv. campestris (strain 8004).